We begin with the raw amino-acid sequence, 104 residues long: L-rhamnose mutarotase (104 aa).

Substrate is bound at residue Tyr18. Catalysis depends on His22, which acts as the Proton donor. Substrate-binding positions include Tyr41 and 76–77 (WW).

This sequence belongs to the rhamnose mutarotase family. Homodimer.

The protein localises to the cytoplasm. It carries out the reaction alpha-L-rhamnose = beta-L-rhamnose. Its pathway is carbohydrate metabolism; L-rhamnose metabolism. Its function is as follows. Involved in the anomeric conversion of L-rhamnose. This Enterobacter sp. (strain 638) protein is L-rhamnose mutarotase.